The following is a 97-amino-acid chain: Cell division topological specificity factor (97 aa).

It belongs to the MinE family.

Prevents the cell division inhibition by proteins MinC and MinD at internal division sites while permitting inhibition at polar sites. This ensures cell division at the proper site by restricting the formation of a division septum at the midpoint of the long axis of the cell. The sequence is that of Cell division topological specificity factor from Synechococcus sp. (strain RCC307).